A 255-amino-acid chain; its full sequence is Expansin-A25 (255 aa).

Positions 1–26 are cleaved as a signal peptide; sequence MEYAILFATSLVITVLAASGFAPAHG. The Expansin-like EG45 domain occupies 45–160; that stretch reads GGACGYGNLY…QQVKCWRQGG (116 aa). Residues 170-249 form the Expansin-like CBD domain; that stretch reads FFELVLVSNV…WWSFGMTFTS (80 aa).

The protein belongs to the expansin family. Expansin A subfamily. In terms of tissue distribution, expressed in panicles and flowers.

The protein localises to the secreted. It localises to the cell wall. Its subcellular location is the membrane. Its function is as follows. May cause loosening and extension of plant cell walls by disrupting non-covalent bonding between cellulose microfibrils and matrix glucans. No enzymatic activity has been found. May be required for rapid internodal elongation in deepwater rice during submergence. This Oryza sativa subsp. japonica (Rice) protein is Expansin-A25 (EXPA25).